The sequence spans 356 residues: Phosphate acyltransferase (356 aa).

Belongs to the PlsX family. Homodimer. Probably interacts with PlsY.

Its subcellular location is the cytoplasm. The enzyme catalyses a fatty acyl-[ACP] + phosphate = an acyl phosphate + holo-[ACP]. It participates in lipid metabolism; phospholipid metabolism. Functionally, catalyzes the reversible formation of acyl-phosphate (acyl-PO(4)) from acyl-[acyl-carrier-protein] (acyl-ACP). This enzyme utilizes acyl-ACP as fatty acyl donor, but not acyl-CoA. The sequence is that of Phosphate acyltransferase from Shigella boydii serotype 4 (strain Sb227).